A 247-amino-acid chain; its full sequence is Terpene cyclase adrI (247 aa).

The next 5 helical transmembrane spans lie at 20–40, 51–71, 76–96, 112–132, and 141–161; these read VAEF…FSML, TGIF…FIYP, HWEG…FFII, NLYF…YSFA, and FFYG…AQIL. Asn-164 carries an N-linked (GlcNAc...) asparagine glycan. Helical transmembrane passes span 179–199 and 205–225; these read FGGF…GPWF and KFYI…YYVI.

This sequence belongs to the paxB family.

It is found in the membrane. The protein operates within secondary metabolite biosynthesis; terpenoid biosynthesis. Its function is as follows. Terpene cyclase; part of the gene cluster that mediates the biosynthesis of andrastins, meroterpenoid compounds that exhibit inhibitory activity against ras farnesyltransferase, suggesting that they could be promising leads for antitumor agents. The first step of the pathway is the synthesis of 3,5-dimethylorsellinic acid (DMOA) by the polyketide synthase adrD via condensation of one acetyl-CoA starter unit with 3 malonyl-CoA units and 2 methylations. DMAO is then converted to farnesyl-DMAO by the prenyltransferase adrG. The methyltransferase adrK catalyzes the methylation of the carboxyl group of farnesyl-DMAO to farnesyl-DMAO methyl ester which is further converted to epoxyfarnesyl-DMAO methyl ester by the FAD-dependent monooxygenase adrH. The terpene cyclase adrI then catalyzes the carbon skeletal rearrangement to generate the andrastin E, the first compound in the pathway having the andrastin scaffold, with the tetracyclic ring system. The post-cyclization tailoring enzymes adrF, adrE, adrJ, and adrA, are involved in the conversion of andrastin E into andrastin A. The short chain dehydrogenase adrF is responsible for the oxidation of the C-3 a hydroxyl group of andrastin E to yield the corresponding ketone, andrastin D. The ketoreductase adrE stereoselectively reduces the carbonyl moiety to reverse the stereochemistry of the C-3 position to yield andrastin F. The acetyltransferase adrJ is the acetyltransferase that attaches the acetyl group to the C-3 hydroxyl group of andrastin F to yield andrastin C. Finally, the cytochrome P450 monooxygenase adrA catalyzes two sequential oxidation reactions of the C-23 methyl group, to generate the corresponding alcohol andrastin B, and aldehyde andrastin A. In Penicillium rubens (strain ATCC 28089 / DSM 1075 / NRRL 1951 / Wisconsin 54-1255) (Penicillium chrysogenum), this protein is Terpene cyclase adrI.